The primary structure comprises 331 residues: tRNA U34 carboxymethyltransferase (331 aa).

Carboxy-S-adenosyl-L-methionine is bound by residues Lys-91, Trp-105, Lys-110, Gly-130, Asp-152–Ser-154, Ile-181–Glu-182, Met-196, Tyr-200, and Arg-315.

It belongs to the class I-like SAM-binding methyltransferase superfamily. CmoB family. Homotetramer.

It carries out the reaction carboxy-S-adenosyl-L-methionine + 5-hydroxyuridine(34) in tRNA = 5-carboxymethoxyuridine(34) in tRNA + S-adenosyl-L-homocysteine + H(+). Its function is as follows. Catalyzes carboxymethyl transfer from carboxy-S-adenosyl-L-methionine (Cx-SAM) to 5-hydroxyuridine (ho5U) to form 5-carboxymethoxyuridine (cmo5U) at position 34 in tRNAs. The chain is tRNA U34 carboxymethyltransferase from Shewanella baltica (strain OS185).